The chain runs to 415 residues: Zinc finger protein ZFMSA12A (415 aa).

The segment at 1 to 36 (MGIQDARWPSEDEETHLLDSSSAEQTRGEKCSDSTP) is disordered. C2H2-type zinc fingers lie at residues 78-100 (HKCT…QRLH), 106-129 (YRCS…RTQC), 134-156 (YICI…QCVH), 161-183 (FDCS…ELTH), 189-211 (FTCR…QKIH), 217-239 (NQCM…EVRH), 245-267 (QICA…MRSH), 273-295 (FQCT…VRTH), 301-323 (YLCS…RRTH), 329-351 (YKCS…MRVH), 357-379 (YVCS…SMNH), and 385-407 (YACQ…LKTH).

The protein resides in the nucleus. The protein is Zinc finger protein ZFMSA12A of Micropterus salmoides (Largemouth bass).